We begin with the raw amino-acid sequence, 227 residues long: Ribose-5-phosphate isomerase A (227 aa).

Substrate is bound by residues 26–29 (TGST), 82–85 (DGAD), and 95–98 (KGGG). Glutamate 104 acts as the Proton acceptor in catalysis. Lysine 122 lines the substrate pocket.

Belongs to the ribose 5-phosphate isomerase family. As to quaternary structure, homodimer.

It catalyses the reaction aldehydo-D-ribose 5-phosphate = D-ribulose 5-phosphate. The protein operates within carbohydrate degradation; pentose phosphate pathway; D-ribose 5-phosphate from D-ribulose 5-phosphate (non-oxidative stage): step 1/1. Catalyzes the reversible conversion of ribose-5-phosphate to ribulose 5-phosphate. The protein is Ribose-5-phosphate isomerase A of Streptococcus pneumoniae serotype 2 (strain D39 / NCTC 7466).